A 304-amino-acid polypeptide reads, in one-letter code: Non-specific ribonucleoside hydrolase RihC (304 aa).

His233 is a catalytic residue.

The protein belongs to the IUNH family. RihC subfamily.

Hydrolyzes both purine and pyrimidine ribonucleosides with a broad-substrate specificity. In Klebsiella pneumoniae (strain 342), this protein is Non-specific ribonucleoside hydrolase RihC.